We begin with the raw amino-acid sequence, 505 residues long: ATP synthase subunit alpha, chloroplastic (505 aa).

170-177 lines the ATP pocket; that stretch reads GDRQTGKT.

It belongs to the ATPase alpha/beta chains family. In terms of assembly, F-type ATPases have 2 components, CF(1) - the catalytic core - and CF(0) - the membrane proton channel. CF(1) has five subunits: alpha(3), beta(3), gamma(1), delta(1), epsilon(1). CF(0) has four main subunits: a, b, b' and c.

The protein resides in the plastid. It is found in the chloroplast thylakoid membrane. It catalyses the reaction ATP + H2O + 4 H(+)(in) = ADP + phosphate + 5 H(+)(out). Its function is as follows. Produces ATP from ADP in the presence of a proton gradient across the membrane. The alpha chain is a regulatory subunit. The protein is ATP synthase subunit alpha, chloroplastic of Oenothera biennis (German evening primrose).